The primary structure comprises 487 residues: Zinc finger protein 345 (487 aa).

C2H2-type zinc fingers lie at residues 62 to 84 (LECK…QRIH), 90 to 112 (YECK…QRIH), 118 to 140 (YECN…QRIH), 146 to 168 (YECK…QIIH), 174 to 196 (YECK…HRIH), 202 to 224 (YECK…RRVH), 230 to 252 (YECK…QRIH), 258 to 280 (YICN…QRIH), 286 to 308 (YVCK…QRIH), 314 to 336 (YECK…QRMH), 342 to 364 (YECK…QRIH), 370 to 392 (YECK…QLIH), 398 to 420 (YECR…QRIH), 426 to 448 (YECK…QRMH), and 454 to 476 (YECK…KKNH).

It belongs to the krueppel C2H2-type zinc-finger protein family.

The protein localises to the nucleus. Its function is as follows. May be involved in transcriptional regulation. This Bos taurus (Bovine) protein is Zinc finger protein 345 (ZNF345).